The sequence spans 398 residues: Acetate kinase (398 aa).

N10 lines the Mg(2+) pocket. K17 lines the ATP pocket. R89 contacts substrate. D148 acts as the Proton donor/acceptor in catalysis. Residues 208–212 (HLGNG), 283–285 (DCR), and 331–335 (GIGEN) each bind ATP. E385 serves as a coordination point for Mg(2+).

This sequence belongs to the acetokinase family. In terms of assembly, homodimer. The cofactor is Mg(2+). Mn(2+) is required as a cofactor.

The protein resides in the cytoplasm. The catalysed reaction is acetate + ATP = acetyl phosphate + ADP. It participates in metabolic intermediate biosynthesis; acetyl-CoA biosynthesis; acetyl-CoA from acetate: step 1/2. Its function is as follows. Catalyzes the formation of acetyl phosphate from acetate and ATP. Can also catalyze the reverse reaction. The chain is Acetate kinase from Histophilus somni (strain 129Pt) (Haemophilus somnus).